We begin with the raw amino-acid sequence, 186 residues long: MLALFNKLLDWFKALFWKEEMELTLVGLQYSGKTTFVNVIASGQFNEDMIPTVGFNMRKITKGNVTIKLWDIGGQPRFRSMWERYCRGVSAIVYMVDAADQDKIEASKNELHNLLDKAQLQGIPVLVLGNKRDIPGALDEKELIERMNLSAIQDREICCYSISCKEKDNIDITLQWLIQHSKSRRS.

Residues 1 to 19 constitute an intramembrane region (note=Mediates targeting to membranes); that stretch reads MLALFNKLLDWFKALFWKE. GTP is bound by residues 29-35, 71-75, and 130-133; these read QYSGKTT, DIGGQ, and NKRD.

Belongs to the small GTPase superfamily. Arf family.

It is found in the late endosome membrane. It localises to the lysosome membrane. Functionally, may play a role in lysosomes motility. Alternatively, may play a role in chromosome segregation. The protein is ADP-ribosylation factor-like protein 8A (arl8a) of Xenopus tropicalis (Western clawed frog).